The sequence spans 328 residues: Alanine racemase (328 aa).

K33 functions as the Proton acceptor; specific for D-alanine in the catalytic mechanism. At K33 the chain carries N6-(pyridoxal phosphate)lysine. Residue R118 coordinates substrate. The active-site Proton acceptor; specific for L-alanine is the Y237. M283 contacts substrate.

Belongs to the alanine racemase family. Pyridoxal 5'-phosphate is required as a cofactor.

It catalyses the reaction L-alanine = D-alanine. Its pathway is amino-acid biosynthesis; D-alanine biosynthesis; D-alanine from L-alanine: step 1/1. Its function is as follows. Catalyzes the interconversion of L-alanine and D-alanine. May also act on other amino acids. This Campylobacter jejuni subsp. jejuni serotype O:23/36 (strain 81-176) protein is Alanine racemase (alr).